The following is an 827-amino-acid chain: uncharacterized protein (827 aa).

This is an uncharacterized protein from Methanocaldococcus jannaschii (strain ATCC 43067 / DSM 2661 / JAL-1 / JCM 10045 / NBRC 100440) (Methanococcus jannaschii).